Consider the following 155-residue polypeptide: Myosin light chain alkali (155 aa).

2 consecutive EF-hand domains span residues 7–41 (REVE…LNLN) and 80–115 (GCYE…LGES).

Myosin is a hexamer of 2 heavy chains and 4 light chains.

The chain is Myosin light chain alkali (Mlc1) from Drosophila simulans (Fruit fly).